We begin with the raw amino-acid sequence, 40 residues long: Dolichyl-diphosphooligosaccharide--protein glycosyltransferase subunit 4 (40 aa).

Over 1 to 4 (MITD) the chain is Lumenal. A helical membrane pass occupies residues 5-25 (VQLAIFSNVLGVFLFLLVVAY). Residues 26–40 (HYINANTGKSSIKTK) lie on the Cytoplasmic side of the membrane.

The protein belongs to the OST4 family. Component of the oligosaccharyltransferase (OST) complex.

It is found in the endoplasmic reticulum membrane. Its function is as follows. Subunit of the oligosaccharyl transferase (OST) complex that catalyzes the initial transfer of a defined glycan (Glc(3)Man(9)GlcNAc(2) in eukaryotes) from the lipid carrier dolichol-pyrophosphate to an asparagine residue within an Asn-X-Ser/Thr consensus motif in nascent polypeptide chains, the first step in protein N-glycosylation. N-glycosylation occurs cotranslationally and the complex associates with the Sec61 complex at the channel-forming translocon complex that mediates protein translocation across the endoplasmic reticulum (ER). All subunits are required for a maximal enzyme activity. The sequence is that of Dolichyl-diphosphooligosaccharide--protein glycosyltransferase subunit 4 from Drosophila virilis (Fruit fly).